A 251-amino-acid chain; its full sequence is Protein DEEPER ROOTING 1 (251 aa).

Positions Ser46–Thr52 match the IGT motif motif. Residues Val64–Gln105 are a coiled coil.

Belongs to the LAZY family.

Functionally, involved in the control of root growth angle. Involved in cell elongation in the root tip that causes asymmetric root growth and downward bending of the root in response to gravity. In Oryza sativa subsp. japonica (Rice), this protein is Protein DEEPER ROOTING 1.